A 494-amino-acid chain; its full sequence is Tripartite motif-containing protein 5 (494 aa).

Ala2 is modified (N-acetylalanine). The RING-type zinc-finger motif lies at 15–59; the sequence is CPICLELLTEPLSLDCGHSFCQACITANHKESTPHQGERSCPLCR. At Ser86 the chain carries Phosphoserine. Residues 91–132 form a B box-type zinc finger; the sequence is QKVGHCARHGEKLLLFCEQDGNVICWLCERSQEHRGHHTFLV. Residues Cys96, His99, Cys118, and His124 each contribute to the Zn(2+) site. A coiled-coil region spans residues 131-223; it reads LVEEVAEKYQ…RLVQSESDMA (93 aa). Residues 186–199 form a required for interaction with GABARAP and for autophagy region; that stretch reads FKQLRDILDCEESK. Residues 280–494 enclose the B30.2/SPRY domain; it reads PDLKGMLQAF…LPMTLCSPSS (215 aa).

This sequence belongs to the TRIM/RBCC family. Can form homodimers and homotrimers. In addition to lower-order dimerization, also exhibits a higher-order multimerization and both low- and high-order multimerizations are essential for its restriction activity. Interacts with BTBD1 and BTBD2. Interacts with PSMC4, PSMC5, PSMD7 and HSPA8/HSC70. Interacts (via B30.2/SPRY domain) with HSPA1A/B. Interacts with PSMC2, MAP3K7/TAK1, TAB2 and TAB3. Interacts with SQSTM1. Interacts with TRIM6 and TRIM34. Interacts with ULK1 (phosphorylated form), GABARAP, GABARAPL1, GABARAPL2, MAP1LC3A, MAP1LC3C and BECN1. Post-translationally, degraded in a proteasome-independent fashion in the absence of viral infection but in a proteasome-dependent fashion following exposure to restriction sensitive virus. In terms of processing, autoubiquitinated in a RING finger- and UBE2D2-dependent manner. Monoubiquitinated by TRIM21. Deubiquitinated by Yersinia YopJ. Ubiquitination may not lead to proteasomal degradation.

It is found in the cytoplasm. The protein localises to the nucleus. It carries out the reaction S-ubiquitinyl-[E2 ubiquitin-conjugating enzyme]-L-cysteine + [acceptor protein]-L-lysine = [E2 ubiquitin-conjugating enzyme]-L-cysteine + N(6)-ubiquitinyl-[acceptor protein]-L-lysine.. The protein operates within protein modification; protein ubiquitination. Its function is as follows. Capsid-specific restriction factor that prevents infection from non-host-adapted retroviruses. Blocks viral replication early in the life cycle, after viral entry but before reverse transcription. In addition to acting as a capsid-specific restriction factor, also acts as a pattern recognition receptor that activates innate immune signaling in response to the retroviral capsid lattice. Binding to the viral capsid triggers its E3 ubiquitin ligase activity, and in concert with the heterodimeric ubiquitin conjugating enzyme complex UBE2V1-UBE2N (also known as UBC13-UEV1A complex) generates 'Lys-63'-linked polyubiquitin chains, which in turn are catalysts in the autophosphorylation of the MAP3K7/TAK1 complex (includes TAK1, TAB2, and TAB3). Activation of the MAP3K7/TAK1 complex by autophosphorylation results in the induction and expression of NF-kappa-B and MAPK-responsive inflammatory genes, thereby leading to an innate immune response in the infected cell. Plays a role in regulating autophagy through activation of autophagy regulator BECN1 by causing its dissociation from its inhibitors BCL2 and TAB2. The polypeptide is Tripartite motif-containing protein 5 (TRIM5) (Saguinus oedipus (Cotton-top tamarin)).